The primary structure comprises 269 residues: Uncharacterised methyltransferase MT1546 (269 aa).

This sequence belongs to the methyltransferase superfamily.

The chain is Uncharacterised methyltransferase MT1546 from Mycobacterium tuberculosis (strain CDC 1551 / Oshkosh).